The chain runs to 225 residues: Ribose-5-phosphate isomerase A (225 aa).

Residues 32-35, 85-88, and 98-101 each bind substrate; these read TGST, DGAD, and KGGG. The Proton acceptor role is filled by Glu-107. Lys-125 serves as a coordination point for substrate.

This sequence belongs to the ribose 5-phosphate isomerase family. In terms of assembly, homodimer.

The enzyme catalyses aldehydo-D-ribose 5-phosphate = D-ribulose 5-phosphate. Its pathway is carbohydrate degradation; pentose phosphate pathway; D-ribose 5-phosphate from D-ribulose 5-phosphate (non-oxidative stage): step 1/1. Its function is as follows. Catalyzes the reversible conversion of ribose-5-phosphate to ribulose 5-phosphate. The sequence is that of Ribose-5-phosphate isomerase A from Marinobacter nauticus (strain ATCC 700491 / DSM 11845 / VT8) (Marinobacter aquaeolei).